The chain runs to 194 residues: Small ribosomal subunit protein uS7 (194 aa).

It belongs to the universal ribosomal protein uS7 family. In terms of assembly, part of the 30S ribosomal subunit.

One of the primary rRNA binding proteins, it binds directly to 16S rRNA where it nucleates assembly of the head domain of the 30S subunit. Is located at the subunit interface close to the decoding center. The protein is Small ribosomal subunit protein uS7 of Methanococcus vannielii (strain ATCC 35089 / DSM 1224 / JCM 13029 / OCM 148 / SB).